The chain runs to 190 residues: Protein PLANT CADMIUM RESISTANCE 10 (190 aa).

The next 2 helical transmembrane spans lie at 78–98 (LLGSGTFAGPCLTHCISWALV) and 108–125 (GALLGLPGCFVSCYACGY).

Belongs to the cornifelin family.

It is found in the membrane. Its function is as follows. May be involved in cadmium resistance. The sequence is that of Protein PLANT CADMIUM RESISTANCE 10 (PCR10) from Arabidopsis thaliana (Mouse-ear cress).